Here is a 101-residue protein sequence, read N- to C-terminus: Urease subunit beta (101 aa).

The protein belongs to the urease beta subunit family. Heterotrimer of UreA (gamma), UreB (beta) and UreC (alpha) subunits. Three heterotrimers associate to form the active enzyme.

Its subcellular location is the cytoplasm. It carries out the reaction urea + 2 H2O + H(+) = hydrogencarbonate + 2 NH4(+). Its pathway is nitrogen metabolism; urea degradation; CO(2) and NH(3) from urea (urease route): step 1/1. The polypeptide is Urease subunit beta (Sinorhizobium medicae (strain WSM419) (Ensifer medicae)).